The sequence spans 728 residues: Catalase-peroxidase (728 aa).

The tryptophyl-tyrosyl-methioninium (Trp-Tyr) (with M-244) cross-link spans 91–218 (WHSAGTYRIA…LAAVQMGLIY (128 aa)). His-92 functions as the Proton acceptor in the catalytic mechanism. Residues 218–244 (YVNPEGPDGNPDPVAAARDIRETFARM) constitute a cross-link (tryptophyl-tyrosyl-methioninium (Tyr-Met) (with W-91)). Heme b is bound at residue His-259.

The protein belongs to the peroxidase family. Peroxidase/catalase subfamily. As to quaternary structure, homodimer or homotetramer. Heme b serves as cofactor. Post-translationally, formation of the three residue Trp-Tyr-Met cross-link is important for the catalase, but not the peroxidase activity of the enzyme.

The enzyme catalyses H2O2 + AH2 = A + 2 H2O. The catalysed reaction is 2 H2O2 = O2 + 2 H2O. In terms of biological role, bifunctional enzyme with both catalase and broad-spectrum peroxidase activity. The protein is Catalase-peroxidase of Burkholderia multivorans (strain ATCC 17616 / 249).